The primary structure comprises 1183 residues: Polyphosphatidylinositol phosphatase INP52 (1183 aa).

Residues 133 to 153 (PPSISTHSSRSSLRSSSSRSL) show a composition bias toward low complexity. The disordered stretch occupies residues 133–161 (PPSISTHSSRSSLRSSSSRSLNAQEQAPK). Ser-152 is modified (phosphoserine). The region spanning 167 to 507 (LRKLLSNGSF…GDQISQIYTG (341 aa)) is the SAC domain. Ser-522 carries the phosphoserine modification. The segment covering 955 to 968 (SPLLSGPSPQPSVV) has biased composition (low complexity). Residues 955–1183 (SPLLSGPSPQ…VHPLKPCDPN (229 aa)) form a disordered region. Residues Ser-1005 and Ser-1016 each carry the phosphoserine modification. Thr-1032 is subject to Phosphothreonine. 3 stretches are compositionally biased toward polar residues: residues 1046–1057 (KPVSLQKSSSEL), 1082–1100 (STAP…VSTT), and 1130–1145 (KLNT…SPSN). Ser-1095 is subject to Phosphoserine.

This sequence belongs to the synaptojanin family. It in the central section; belongs to the inositol 1,4,5-trisphosphate 5-phosphatase family. In terms of assembly, interacts (via SAC domain) with BSP1; the interaction is direct. Interacts with ABP1.

It localises to the cytoplasm. Its subcellular location is the cytoskeleton. The protein localises to the actin patch. It catalyses the reaction a 1,2-diacyl-sn-glycero-3-phospho-(1D-myo-inositol-4,5-bisphosphate) + H2O = a 1,2-diacyl-sn-glycero-3-phospho-(1D-myo-inositol 4-phosphate) + phosphate. Functionally, dephosphorylates a number of phosphatidylinositols (PIs) like phosphatidylinositol 4,5-bisphosphate (PtdIns(4,5)P2), but also phosphatidylinositol 3-phosphate (PtdIns(3)P), phosphatidylinositol 4-phosphate (PtdIns(4)P), and phosphatidylinositol 3,5-bisphosphate (PtdIns(3,5)P2). Controls the cellular levels and subcellular distribution of phosphatidylinositol 3-phosphate and phosphatidylinositol 4,5-bisphosphate. Specifically functions within the early endocytic pathway and actin organization. The sequence is that of Polyphosphatidylinositol phosphatase INP52 from Saccharomyces cerevisiae (strain ATCC 204508 / S288c) (Baker's yeast).